A 145-amino-acid polypeptide reads, in one-letter code: MYPAHLLVLLAVCVSLLGASAIPPLPLNLVQFTYLIQCANKGSRASYHYADYGCYCGAGGSGTPVDELDRCCKIHDDCYGEAEKMGCYPKLTMYNYYCGTEGPYCNTKTDCQRYVCACDLQAAKCFARSPYNNKNYNIDTSKRCK.

Residues Met1–Ala21 form the signal peptide. Residues Ile22–Leu27 constitute a propeptide that is removed on maturation. Cystine bridges form between Cys38/Cys98, Cys54/Cys144, Cys56/Cys72, Cys71/Cys125, Cys78/Cys118, Cys87/Cys111, and Cys105/Cys116. Tyr55, Gly57, and Gly59 together coordinate Ca(2+). His75 is an active-site residue. Asp76 is a Ca(2+) binding site. Residue Asp119 is part of the active site.

Belongs to the phospholipase A2 family. Group I subfamily. D49 sub-subfamily. It depends on Ca(2+) as a cofactor. In terms of tissue distribution, expressed by the venom gland.

It localises to the secreted. The enzyme catalyses a 1,2-diacyl-sn-glycero-3-phosphocholine + H2O = a 1-acyl-sn-glycero-3-phosphocholine + a fatty acid + H(+). PLA2 catalyzes the calcium-dependent hydrolysis of the 2-acyl groups in 3-sn-phosphoglycerides. The polypeptide is Basic phospholipase A2 cPt10 (Laticauda semifasciata (Black-banded sea krait)).